Consider the following 243-residue polypeptide: Terpene cyclase dpmaB (243 aa).

The next 6 membrane-spanning stretches (helical) occupy residues 11-31 (PGYLEVAWIADTCKLLMGLGW), 51-71 (ALMPLCCNFAWELTYAVIYPF), 112-132 (LPFIFIICIAAWTTAHLALAL), 141-161 (AFSAYGCQLLLSVGALCQLLS), 169-189 (SYFLWFCRFFGSLVLIPQDVL), and 207-227 (IWFVSIFLLLDGSYALCLWYV).

It belongs to the paxB family.

The protein resides in the membrane. It functions in the pathway secondary metabolite biosynthesis; terpenoid biosynthesis. Its function is as follows. Terpene cyclase; part of the gene cluster that mediates the biosynthesis of the diterpenoid pyrones subglutinols A and B. The first step of the pathway is the synthesis of the alpha-pyrone moiety by the polyketide synthase dpmaA via condensation of one acetyl-CoA starter unit with 3 malonyl-CoA units and 2 methylations. The alpha-pyrone is then combined with geranylgeranyl pyrophosphate (GGPP) formed by the GGPP synthase dpmaD through the action of the prenyltransferase dpmaC to yield a linear alpha-pyrone diterpenoid. Subsequent steps in the diterpenoid pyrone biosynthetic pathway involve the decalin core formation, which is initiated by the epoxidation of the C10-C11 olefin by the FAD-dependent oxidoreductase dpmaE, and is followed by a cyclization cascade catalyzed by the terpene cyclase dpmaB. The dehydrogenase dpmaF is then involved in tetrahydrofuran (THF) ring formation at the C5 unit to complete the formation of subglutinols A and B. The protein is Terpene cyclase dpmaB of Metarhizium anisopliae (Entomophthora anisopliae).